Consider the following 1132-residue polypeptide: DNA-directed RNA polymerase subunit beta (1132 aa).

Belongs to the RNA polymerase beta chain family. As to quaternary structure, the RNAP catalytic core consists of 2 alpha, 1 beta, 1 beta' and 1 omega subunit. When a sigma factor is associated with the core the holoenzyme is formed, which can initiate transcription.

The catalysed reaction is RNA(n) + a ribonucleoside 5'-triphosphate = RNA(n+1) + diphosphate. DNA-dependent RNA polymerase catalyzes the transcription of DNA into RNA using the four ribonucleoside triphosphates as substrates. The polypeptide is DNA-directed RNA polymerase subunit beta (Carboxydothermus hydrogenoformans (strain ATCC BAA-161 / DSM 6008 / Z-2901)).